A 362-amino-acid polypeptide reads, in one-letter code: Dihydroorotate dehydrogenase (quinone) (362 aa).

Residues 62–66 (AGYDK) and Thr86 each bind FMN. Substrate is bound at residue Lys66. 111 to 115 (NRLGF) is a binding site for substrate. 2 residues coordinate FMN: Asn139 and Asn170. Asn170 serves as a coordination point for substrate. Residue Ser173 is the Nucleophile of the active site. Asn175 contributes to the substrate binding site. Residues Lys215 and Ser243 each coordinate FMN. 244–245 (NT) is a binding site for substrate. Residues Gly266, Gly295, and 316–317 (YS) contribute to the FMN site.

The protein belongs to the dihydroorotate dehydrogenase family. Type 2 subfamily. In terms of assembly, monomer. The cofactor is FMN.

The protein resides in the cell membrane. The enzyme catalyses (S)-dihydroorotate + a quinone = orotate + a quinol. It functions in the pathway pyrimidine metabolism; UMP biosynthesis via de novo pathway; orotate from (S)-dihydroorotate (quinone route): step 1/1. Catalyzes the conversion of dihydroorotate to orotate with quinone as electron acceptor. This chain is Dihydroorotate dehydrogenase (quinone), found in Rhizobium meliloti (strain 1021) (Ensifer meliloti).